The sequence spans 397 residues: Cysteine desulfurase (397 aa).

Pyridoxal 5'-phosphate-binding positions include Asn-148, Gln-176, and 196–198; that span reads SAH. Position 199 is an N6-(pyridoxal phosphate)lysine (Lys-199). Thr-234 contacts pyridoxal 5'-phosphate. Cys-321 functions as the Cysteine persulfide intermediate in the catalytic mechanism. Cys-321 contributes to the [2Fe-2S] cluster binding site.

The protein belongs to the class-V pyridoxal-phosphate-dependent aminotransferase family. NifS/IscS subfamily. As to quaternary structure, homodimer. Requires pyridoxal 5'-phosphate as cofactor.

It carries out the reaction (sulfur carrier)-H + L-cysteine = (sulfur carrier)-SH + L-alanine. Functionally, catalyzes the removal of elemental sulfur atoms from cysteine to produce alanine. Seems to participate in the biosynthesis of the nitrogenase metalloclusters by providing the inorganic sulfur required for the Fe-S core formation. This is Cysteine desulfurase from Klebsiella pneumoniae.